The following is a 107-amino-acid chain: UPF0145 protein YbjQ (107 aa).

This sequence belongs to the UPF0145 family.

This Escherichia coli (strain SMS-3-5 / SECEC) protein is UPF0145 protein YbjQ.